The following is a 957-amino-acid chain: Sorting nexin-13 (957 aa).

The 188-residue stretch at 97–284 (ANIIDEPLQQ…YVIWMIRDSN (188 aa)) folds into the PXA domain. In terms of domain architecture, RGS spans 373–511 (PLDSILVDNV…SFRQNALYVR (139 aa)). The region spanning 559-680 (VQLHAYISDT…DFLENKAYSK (122 aa)) is the PX domain. A 1,2-diacyl-sn-glycero-3-phospho-(1D-myo-inositol-3-phosphate)-binding residues include arginine 601, serine 603, lysine 628, and arginine 642.

It belongs to the sorting nexin family.

Its subcellular location is the early endosome membrane. May be involved in several stages of intracellular trafficking. Acts as a GAP for Galphas. May play a role in endosome homeostasis. The chain is Sorting nexin-13 (Snx13) from Mus musculus (Mouse).